The primary structure comprises 573 residues: Solute carrier family 41 member 2 (573 aa).

The Extracellular segment spans residues Met-1 to Gln-162. A phosphoserine mark is found at Ser-136 and Ser-137. The helical transmembrane segment at Ile-163 to Ile-183 threads the bilayer. Topologically, residues Val-184–Glu-195 are cytoplasmic. Residues Val-196–Ser-216 traverse the membrane as a helical segment. Over Arg-217–Gln-245 the chain is Extracellular. A helical membrane pass occupies residues Val-246 to Pro-266. Residues Glu-267–Ser-282 lie on the Cytoplasmic side of the membrane. The helical transmembrane segment at Val-283–Gly-303 threads the bilayer. At Ser-304 to Asn-313 the chain is on the extracellular side. The helical transmembrane segment at Val-314 to Ile-334 threads the bilayer. Topologically, residues Ser-335 to Tyr-347 are cytoplasmic. The helical transmembrane segment at Ile-348–Ala-368 threads the bilayer. The Extracellular segment spans residues Lys-369–Val-376. A helical transmembrane segment spans residues Leu-377–Ile-397. The Cytoplasmic portion of the chain corresponds to Leu-398–Asn-406. A helical transmembrane segment spans residues Leu-407 to Ile-427. The Extracellular portion of the chain corresponds to Gln-428–Ala-469. Residues Gln-470–Met-490 form a helical membrane-spanning segment. At Lys-491–Thr-498 the chain is on the cytoplasmic side. Residues Ile-499–Ile-519 traverse the membrane as a helical segment. The Extracellular segment spans residues Ala-520–Thr-543. The chain crosses the membrane as a helical span at residues Ala-544–Ile-564. Topologically, residues Gly-565 to Asp-573 are cytoplasmic.

The protein belongs to the SLC41A transporter family.

The protein resides in the cell membrane. The catalysed reaction is Mg(2+)(in) = Mg(2+)(out). It catalyses the reaction Mn(2+)(in) = Mn(2+)(out). It carries out the reaction Co(2+)(in) = Co(2+)(out). The enzyme catalyses Ni(2+)(in) = Ni(2+)(out). The catalysed reaction is Fe(2+)(in) = Fe(2+)(out). Acts as a plasma-membrane magnesium transporter. Can also mediate the transport of other divalent metal cations in an order of Ba(2+) &gt; Ni(2+) &gt; Co(2+) &gt; Fe(2+) &gt; Mn(2+). The protein is Solute carrier family 41 member 2 (SLC41A2) of Homo sapiens (Human).